Reading from the N-terminus, the 183-residue chain is Holliday junction branch migration complex subunit RuvA (183 aa).

The tract at residues 1 to 63 (MIVGLIGVVE…EDAHLLYGFL (63 aa)) is domain I. Residues 64-139 (EESEKILFER…FFIQDENRPA (76 aa)) form a domain II region. Residue A139 is a region of interest, flexible linker. The segment at 139–183 (ARNEVFLALESLGFKSAEINPVLKTLKPHLSIEAAIKEALQQLRS) is domain III.

This sequence belongs to the RuvA family. Homotetramer. Forms an RuvA(8)-RuvB(12)-Holliday junction (HJ) complex. HJ DNA is sandwiched between 2 RuvA tetramers; dsDNA enters through RuvA and exits via RuvB. An RuvB hexamer assembles on each DNA strand where it exits the tetramer. Each RuvB hexamer is contacted by two RuvA subunits (via domain III) on 2 adjacent RuvB subunits; this complex drives branch migration. In the full resolvosome a probable DNA-RuvA(4)-RuvB(12)-RuvC(2) complex forms which resolves the HJ.

The protein resides in the cytoplasm. The RuvA-RuvB-RuvC complex processes Holliday junction (HJ) DNA during genetic recombination and DNA repair, while the RuvA-RuvB complex plays an important role in the rescue of blocked DNA replication forks via replication fork reversal (RFR). RuvA specifically binds to HJ cruciform DNA, conferring on it an open structure. The RuvB hexamer acts as an ATP-dependent pump, pulling dsDNA into and through the RuvAB complex. HJ branch migration allows RuvC to scan DNA until it finds its consensus sequence, where it cleaves and resolves the cruciform DNA. In Helicobacter pylori (strain J99 / ATCC 700824) (Campylobacter pylori J99), this protein is Holliday junction branch migration complex subunit RuvA.